The chain runs to 85 residues: F(1)-ATPase inhibitor IF(1), mitochondrial (85 aa).

A mitochondrion-targeting transit peptide spans 1 to 22 (MLPRSALARSLQLQRGVAARFY). The stretch at 41-84 (KRERATEDFFVRQREKEQLRHLKEQLEKQRKKIDSLENKIDSMT) forms a coiled coil.

Belongs to the ATPase inhibitor family. Monomer and homodimer. The protein aggregates less strongly with increasing pH.

Its subcellular location is the mitochondrion. In terms of biological role, endogenous ATPase inhibitor, which inhibits specifically the reverse ATPase reaction of mitochondrial F(1)F(0)-type ATP synthase. It limits ATP depletion when the mitochondrial membrane potential falls below a threshold and the F(1)F(0)-ATP synthase starts hydrolyzing ATP to pump protons out of the mitochondrial matrix. Required to avoid the consumption of cellular ATP when the F(1)F(0)-ATP synthase enzyme acts as an ATP hydrolase. Functions through inserting its N-terminal part into the catalytically active F1-ATPase, thereby blocking its rotational movement and subsequently the ATP hydrolase activity. The protein is F(1)-ATPase inhibitor IF(1), mitochondrial (INH1) of Saccharomyces cerevisiae (strain ATCC 204508 / S288c) (Baker's yeast).